The sequence spans 89 residues: Small ribosomal subunit protein bS20 (89 aa).

Residues 1-12 (MANIKSAKKRAK) show a composition bias toward basic residues. Positions 1-24 (MANIKSAKKRAKQTVVRNERNTGQ) are disordered.

This sequence belongs to the bacterial ribosomal protein bS20 family.

In terms of biological role, binds directly to 16S ribosomal RNA. The polypeptide is Small ribosomal subunit protein bS20 (Xanthomonas campestris pv. campestris (strain 8004)).